A 426-amino-acid polypeptide reads, in one-letter code: 26S proteasome regulatory subunit 7 (426 aa).

Residue 209 to 216 (GPPGTGKT) participates in ATP binding.

Belongs to the AAA ATPase family.

The protein localises to the cytoplasm. Its subcellular location is the nucleus. Functionally, the 26S proteasome is involved in the ATP-dependent degradation of ubiquitinated proteins. The regulatory (or ATPase) complex confers ATP dependency and substrate specificity to the 26S complex. In Spinacia oleracea (Spinach), this protein is 26S proteasome regulatory subunit 7 (RPT1).